The sequence spans 612 residues: Large ribosomal subunit assembly factor BipA (612 aa).

The 196-residue stretch at 5 to 200 folds into the tr-type G domain; it reads NDLRNIAIIA…TIIKHVPAPV (196 aa). Residues 17–22 and 130–133 contribute to the GTP site; these read DHGKTT and NKID.

The protein belongs to the TRAFAC class translation factor GTPase superfamily. Classic translation factor GTPase family. BipA subfamily. In terms of assembly, monomer.

It is found in the cytoplasm. The catalysed reaction is GTP + H2O = GDP + phosphate + H(+). Its function is as follows. A 50S ribosomal subunit assembly protein with GTPase activity, required for 50S subunit assembly at low temperatures, may also play a role in translation. Binds GTP and analogs. Binds the 70S ribosome between the 30S and 50S subunits, in a similar position as ribosome-bound EF-G; it contacts a number of ribosomal proteins, both rRNAs and the A-site tRNA. The sequence is that of Large ribosomal subunit assembly factor BipA from Bacillus subtilis (strain 168).